We begin with the raw amino-acid sequence, 489 residues long: Aklavinone 12-hydroxylase DnrF (489 aa).

Residues 17 to 18, Glu37, Gln121, and Leu145 each bind FAD; that span reads LG. Tyr224 functions as the Proton acceptor in the catalytic mechanism. Residue Asp308 participates in FAD binding. Gly317 is an aklavinone binding site. 2 disordered regions span residues 402–428 and 455–489; these read VAAE…RAPH and EGGA…PPAN. Residues 468–482 show a composition bias toward low complexity; the sequence is RIWASASTSISSAAM.

The protein belongs to the PheA/TfdB FAD monooxygenase family. In terms of assembly, monomer. The cofactor is FAD.

The enzyme catalyses aklavinone + NADPH + O2 + H(+) = epsilon-rhodomycinone + NADP(+) + H2O. It participates in antibiotic biosynthesis; daunorubicin biosynthesis. The protein operates within antibiotic biosynthesis; carminomycin biosynthesis. Its pathway is antibiotic biosynthesis; rhodomycin biosynthesis. In terms of biological role, involved in the biosynthesis of the anthracyclines carminomycin, rhodomycin and daunorubicin (daunomycin) which are aromatic polyketide antibiotics that exhibit high cytotoxicity and are widely applied in the chemotherapy of a variety of cancers. Catalyzes the incorporation of a hydroxyl group at position C-11 of aklavinone, resulting in epsilon-rhodomycinone. It cannot accept substrates glycosylated at position C-7. It can also hydroxylate 11-deoxycarminomycinone and can use both NAD or NADP. The polypeptide is Aklavinone 12-hydroxylase DnrF (dnrF) (Streptomyces peucetius).